The chain runs to 139 residues: Protein FAM237B (139 aa).

The N-terminal stretch at 1 to 24 is a signal peptide; that stretch reads MCFATRRWFYLHLGCMMLINLVNA. Met112 carries the methionine amide modification. Positions 113–139 are cleaved as a propeptide — removed in the mature form; that stretch reads GRRQVMPPKYNFPQKITGGNLNVYLRE.

Post-translationally, the active form requires C-terminal amidation and disulfide bond formation.

Its subcellular location is the secreted. May be capable of activating GPR83 via the GNAQ signaling pathway. This is Protein FAM237B from Homo sapiens (Human).